Here is a 253-residue protein sequence, read N- to C-terminus: tRNA uridine(34) hydroxylase (253 aa).

The Rhodanese domain maps to 127–221 (HGRPLVLLDT…YFEDVGGEGY (95 aa)). The active-site Cysteine persulfide intermediate is the C181.

The protein belongs to the TrhO family.

It catalyses the reaction uridine(34) in tRNA + AH2 + O2 = 5-hydroxyuridine(34) in tRNA + A + H2O. In terms of biological role, catalyzes oxygen-dependent 5-hydroxyuridine (ho5U) modification at position 34 in tRNAs. This chain is tRNA uridine(34) hydroxylase, found in Xanthomonas campestris pv. campestris (strain B100).